A 450-amino-acid chain; its full sequence is MKKVFVKTYGCQMNEYDSDKMVDVLNASQGLEPTDNVEEADVILFNTCSVREKAQEKVFSELGRMKALKAVKPDLVIGVGGCVASQEGASIVSRAPYVDVVFGPQTLHRLPDLIARRQRTGQSQVDISFPEIEKFDHLPPARVEGPSAFVSIMEGCSKYCSYCVVPYTRGEEVSRPFEDVLAEVAGLAEQGVREVTLLGQNVNAYRGKMGDTTEIADFALLIEYVAEIPGIERIRYTTSHPKEFTSRLVELYGRCDKLVNHLHLPVQHASDRILMAMKRGYSVLEYKSIIRKLRVLRPDMSMSSDFIVGFPGETDADFEKLMAMIEEIGYDTSFSFIFSPRPGTPAANLHDDTPHEVKLRRLQRLQATIEENVQRISQNMVGTVQRILVEGPARKDPTELHGRTENNRVVNFALPGVPQAGRDRLVGQLVDVSITQAFPHSLRGEIVVRQ.

In terms of domain architecture, MTTase N-terminal spans 2-119 (KKVFVKTYGC…LPDLIARRQR (118 aa)). [4Fe-4S] cluster is bound by residues C11, C48, C82, C156, C160, and C163. The 234-residue stretch at 142–375 (RVEGPSAFVS…QATIEENVQR (234 aa)) folds into the Radical SAM core domain. A TRAM domain is found at 378–448 (QNMVGTVQRI…PHSLRGEIVV (71 aa)).

Belongs to the methylthiotransferase family. MiaB subfamily. Monomer. Requires [4Fe-4S] cluster as cofactor.

The protein resides in the cytoplasm. It catalyses the reaction N(6)-dimethylallyladenosine(37) in tRNA + (sulfur carrier)-SH + AH2 + 2 S-adenosyl-L-methionine = 2-methylsulfanyl-N(6)-dimethylallyladenosine(37) in tRNA + (sulfur carrier)-H + 5'-deoxyadenosine + L-methionine + A + S-adenosyl-L-homocysteine + 2 H(+). Its function is as follows. Catalyzes the methylthiolation of N6-(dimethylallyl)adenosine (i(6)A), leading to the formation of 2-methylthio-N6-(dimethylallyl)adenosine (ms(2)i(6)A) at position 37 in tRNAs that read codons beginning with uridine. This chain is tRNA-2-methylthio-N(6)-dimethylallyladenosine synthase, found in Cupriavidus necator (strain ATCC 17699 / DSM 428 / KCTC 22496 / NCIMB 10442 / H16 / Stanier 337) (Ralstonia eutropha).